Consider the following 154-residue polypeptide: 8-oxo-dGTP diphosphatase (154 aa).

A Nudix hydrolase domain is found at 1 to 129 (MPQLATICYI…DHTFVEWLLE (129 aa)). Residues Gly38, Glu53, Glu56, and Glu57 each coordinate Mg(2+). The short motif at 38–59 (GKLERGETPQECAAREILEETG) is the Nudix box element.

This sequence belongs to the Nudix hydrolase family. As to quaternary structure, homotrimer. It depends on Mg(2+) as a cofactor.

It catalyses the reaction 8-oxo-dGTP + H2O = 8-oxo-dGMP + diphosphate + H(+). Its function is as follows. Involved in the DNA repair system to avoid A.T to G.C transversions. Degrades 8-oxo-dGTP to the monophosphate, but is also active on all of the nucleoside triphosphates. The chain is 8-oxo-dGTP diphosphatase (mutX) from Streptococcus pneumoniae serotype 4 (strain ATCC BAA-334 / TIGR4).